Reading from the N-terminus, the 670-residue chain is MSKVFTLNSDFKPAGDQPEAIRRLKEGLEDGLAHQTLLGVTGSGKTFTIANVIADLNRPTMMLAPNKTLAAQLYGEMKEFFPDNAVEYFVSYYDYYQPEAYVPSSDTFIEKDASVNEHIEQMRLSATKALLERRDVIVVASVSAIYGLGDPDLYLKMMLHLTQGMLIDQRAILRRLAELQYSRNDQAFQRGTFRVRGEVIDIFPAESDEIALRVELFDEEVERLSLFDPLTGHVLQTVPRYTIYPKTHYVTPRERILQAMEDIKVELADRRKVLLANDKLVEEQRLSQRTQFDLEMMNELGYCSGIENYSRYLSGRGPGEPPPTLFDYLPADGLLVIDESHVTVPQIGGMYRGDRARKETLVEYGFRLPSALDNRPMKFEEFEALAPQTIYVSATPGNYELEKSGGEVIDQVVRPTGLLDPLIEVRPVATQVDDLLSEIRQRAAVNERVLVTTLTKRMAEDLTEYLEEHGERVRYLHSDIDTVERVEIIRDLRLGEFDVLVGINLLREGLDMPEVSLVAILDADKEGFLRSERSLIQTIGRAARNLRGKAILYGDKITPSMAKAIGETERRREKQEAYNTEHGIVPQGLNKKISDILQLGQPTNRGKGRGNRKAAEPAARYELMTPKALELKIRELESKMLTHAQNLEFEEAAALRDELQALRAQFIAAS.

The 158-residue stretch at 26–183 folds into the Helicase ATP-binding domain; sequence EGLEDGLAHQ…RRLAELQYSR (158 aa). 39 to 46 is a binding site for ATP; sequence GVTGSGKT. A Beta-hairpin motif is present at residues 92 to 115; sequence YYDYYQPEAYVPSSDTFIEKDASV. Residues 431–597 form the Helicase C-terminal domain; it reads QVDDLLSEIR…GLNKKISDIL (167 aa). Residues 630–665 enclose the UVR domain; it reads ELKIRELESKMLTHAQNLEFEEAAALRDELQALRAQ.

Belongs to the UvrB family. In terms of assembly, forms a heterotetramer with UvrA during the search for lesions. Interacts with UvrC in an incision complex.

It localises to the cytoplasm. The UvrABC repair system catalyzes the recognition and processing of DNA lesions. A damage recognition complex composed of 2 UvrA and 2 UvrB subunits scans DNA for abnormalities. Upon binding of the UvrA(2)B(2) complex to a putative damaged site, the DNA wraps around one UvrB monomer. DNA wrap is dependent on ATP binding by UvrB and probably causes local melting of the DNA helix, facilitating insertion of UvrB beta-hairpin between the DNA strands. Then UvrB probes one DNA strand for the presence of a lesion. If a lesion is found the UvrA subunits dissociate and the UvrB-DNA preincision complex is formed. This complex is subsequently bound by UvrC and the second UvrB is released. If no lesion is found, the DNA wraps around the other UvrB subunit that will check the other stand for damage. In Pectobacterium carotovorum subsp. carotovorum (strain PC1), this protein is UvrABC system protein B.